Here is a 298-residue protein sequence, read N- to C-terminus: Cyanophycinase (298 aa).

Active-site charge relay system residues include Ser155, Glu173, and His197.

It belongs to the peptidase S51 family.

It carries out the reaction [L-4-(L-arginin-2-N-yl)aspartate](n) + H2O = [L-4-(L-arginin-2-N-yl)aspartate](n-1) + L-4-(L-arginin-2-N-yl)aspartate. In terms of biological role, exopeptidase that catalyzes the hydrolytic cleavage of multi-L-arginyl-poly-L-aspartic acid (cyanophycin; a water-insoluble reserve polymer) into aspartate-arginine dipeptides. The chain is Cyanophycinase (cphB) from Nostoc sp. (strain PCC 7120 / SAG 25.82 / UTEX 2576).